Here is a 225-residue protein sequence, read N- to C-terminus: Superantigen-like protein 11 (225 aa).

A signal peptide spans 1 to 30 (MKLKNIAKASLALGILTTGMITTTAQPVKA). Positions 94–196 (VDIFVVRENS…RITMKDGGFY (103 aa)) are sialyl Lewis X-binding.

It belongs to the staphylococcal/streptococcal toxin family. As to quaternary structure, homodimer (via its C-terminal domain). Interacts with host FCAR and SELPLG (via sialyl Lewis X).

It is found in the secreted. Functionally, secreted protein that plays a role in the inhibition of host immune system. Targets myeloid cells such as monocytes or granulocytes through binding with sialyllactosamine-containing glycoproteins. Prevents initial rolling of neutrophils toward the site of infection by interacting with host SELPLG. Disrupts neutrophil motility by induction of cell adhesion via interacting with glycans but independently of SELPLG. This chain is Superantigen-like protein 11, found in Staphylococcus aureus (strain Newman).